A 189-amino-acid chain; its full sequence is Protein jagunal homolog (189 aa).

Residues M1–S34 lie on the Cytoplasmic side of the membrane. The chain crosses the membrane as a helical span at residues I35–G55. Over S56–A78 the chain is Lumenal. The chain crosses the membrane as a helical span at residues Y79–F99. The Cytoplasmic portion of the chain corresponds to Q100–K105. A helical transmembrane segment spans residues I106–L126. At G127–G150 the chain is on the lumenal side. Residues I151–F171 traverse the membrane as a helical segment. Topologically, residues S172–D189 are cytoplasmic.

It belongs to the jagunal family.

The protein resides in the endoplasmic reticulum membrane. This Caenorhabditis elegans protein is Protein jagunal homolog.